Consider the following 245-residue polypeptide: Photosystem II protein PSBS2 (245 aa).

The transit peptide at 1-25 directs the protein to the chloroplast; the sequence is MAMTLSTKAFAQRGVSARKNTVRVY. Helical transmembrane passes span 72–92, 108–128, 185–205, and 217–237; these read LFVG…EILT, GIEV…AAVL, LGFA…LAQF, and EFGL…EGSG.

It belongs to the ELIP/psbS family.

The protein resides in the plastid. It localises to the chloroplast thylakoid membrane. In terms of biological role, required for non-photochemical quenching (NPQ), a mechanism that converts and dissipates the harmful excess absorbed light energy into heat and protect the photosynthetic apparatus from photo-oxidative damage. Seems involved in the activation of NPQ, possibly by promoting conformational changes required for activation of LHCSR3-dependent quenching in the antenna of photosystem II (PSII). This is Photosystem II protein PSBS2 from Chlamydomonas reinhardtii (Chlamydomonas smithii).